A 388-amino-acid polypeptide reads, in one-letter code: Leucine aminopeptidase 1 (388 aa).

The first 19 residues, 1–19, serve as a signal peptide directing secretion; sequence MRVLAAIALGATGLRGALA. The propeptide occupies 20–88; the sequence is AVVPQEVLGT…YPTLNSASYV (69 aa). 2 N-linked (GlcNAc...) asparagine glycosylation sites follow: N106 and N180. Zn(2+)-binding residues include H188 and D207. Residue N232 is glycosylated (N-linked (GlcNAc...) asparagine). Positions 246 and 273 each coordinate Zn(2+). Cysteines 322 and 326 form a disulfide. A Zn(2+)-binding site is contributed by H355.

It belongs to the peptidase M28 family. M28E subfamily. As to quaternary structure, monomer. Requires Zn(2+) as cofactor.

It is found in the secreted. Its function is as follows. Extracellular aminopeptidase that allows assimilation of proteinaceous substrates. The polypeptide is Leucine aminopeptidase 1 (lap1) (Aspergillus clavatus (strain ATCC 1007 / CBS 513.65 / DSM 816 / NCTC 3887 / NRRL 1 / QM 1276 / 107)).